The following is a 793-amino-acid chain: Putative potassium transporter 12 (793 aa).

Over 1–54 (MASISDSETTNHGSIWDLDQNLDQPMDEEASRLKNMYTEKKFSSILLLRLAFQS) the chain is Cytoplasmic. A helical transmembrane segment spans residues 55–75 (LGVVFGDLGTSPLYVFYNIFP). Topologically, residues 76–87 (HGVDDDEDVIGA) are extracellular. A helical transmembrane segment spans residues 88–108 (LSLIIYTLTLIPLMKYVFVVL). Over 109–175 (RANDNGQGGT…EGHVYKKNCL (67 aa)) the chain is Cytoplasmic. Residues 176–196 (LILVLIGTCTAIGDGILTPAI) form a helical membrane-spanning segment. Residues 197 to 215 (SVLSASGGIRVQNQKMSTD) are Extracellular-facing. A helical membrane pass occupies residues 216–236 (VVVVVAVIILIGLFSMQHYGT). Residues 237 to 238 (DK) lie on the Cytoplasmic side of the membrane. A helical transmembrane segment spans residues 239 to 259 (VGWLFAPIVLLWFILIGTIGA). Topologically, residues 260–289 (LNIHKYNSSVLKAYNPVYIYRYFRRGKSES) are extracellular. N-linked (GlcNAc...) asparagine glycosylation is present at Asn-266. Residues 290–310 (WTSLGGIMLSITGTEALYADL) form a helical membrane-spanning segment. Residues 311 to 315 (CHFPV) lie on the Cytoplasmic side of the membrane. Residues 316-338 (LAIQIAFTLVVFPCLLLAYTGQA) form a helical membrane-spanning segment. Residues 339–359 (AYIISNKDHVVDAFYRSIPDT) lie on the Extracellular side of the membrane. Residues 360-380 (IYWPVFIIATLAAIVASQATI) form a helical membrane-spanning segment. Residues 381 to 411 (SATYSIIKQALALGCFPRVSVVHTSKKFLGQ) lie on the Cytoplasmic side of the membrane. A helical membrane pass occupies residues 412-432 (IYIPDINWVLMILCIAVTAGF). The Extracellular portion of the chain corresponds to 433-444 (KNQSQIGNAYGT). Residue Asn-434 is glycosylated (N-linked (GlcNAc...) asparagine). Residues 445-465 (AVVIVMLVTTFLMVPIMLLVW) traverse the membrane as a helical segment. The Cytoplasmic segment spans residues 466-468 (KSH). Residues 469–489 (WILVVIFIVLSLMVELPYFTA) form a helical membrane-spanning segment. Residues 490–496 (CINKVDQ) are Extracellular-facing. Residues 497–517 (GGWVPLVVATTCFIIMYVWHF) traverse the membrane as a helical segment. Residues 518-793 (CTVKRYEFEM…LLNVGQIYYI (276 aa)) lie on the Cytoplasmic side of the membrane.

It belongs to the HAK/KUP transporter (TC 2.A.72.3) family.

The protein resides in the membrane. Its function is as follows. High-affinity potassium transporter. The protein is Putative potassium transporter 12 (HAK12) of Oryza sativa subsp. japonica (Rice).